A 425-amino-acid polypeptide reads, in one-letter code: Serine--tRNA ligase (425 aa).

233-235 (TAE) is a binding site for L-serine. 264-266 (RRE) contacts ATP. Residue Glu287 coordinates L-serine. An ATP-binding site is contributed by 351-354 (EISS). Residue Ser387 coordinates L-serine.

The protein belongs to the class-II aminoacyl-tRNA synthetase family. Type-1 seryl-tRNA synthetase subfamily. As to quaternary structure, homodimer. The tRNA molecule binds across the dimer.

It localises to the cytoplasm. It carries out the reaction tRNA(Ser) + L-serine + ATP = L-seryl-tRNA(Ser) + AMP + diphosphate + H(+). The catalysed reaction is tRNA(Sec) + L-serine + ATP = L-seryl-tRNA(Sec) + AMP + diphosphate + H(+). It participates in aminoacyl-tRNA biosynthesis; selenocysteinyl-tRNA(Sec) biosynthesis; L-seryl-tRNA(Sec) from L-serine and tRNA(Sec): step 1/1. Catalyzes the attachment of serine to tRNA(Ser). Is also able to aminoacylate tRNA(Sec) with serine, to form the misacylated tRNA L-seryl-tRNA(Sec), which will be further converted into selenocysteinyl-tRNA(Sec). The chain is Serine--tRNA ligase from Thermotoga sp. (strain RQ2).